Reading from the N-terminus, the 316-residue chain is LIM/homeobox protein lim-6 (316 aa).

LIM zinc-binding domains are found at residues 40–101 (KLCS…LYGK) and 102–163 (RCRR…ICNF). The homeobox DNA-binding region spans 186 to 245 (PKRPRTILNAQQRRQFKTAFERSSKPSRKVREQLANETGLSVRVVQVWFQNQRAKIKKLN). The interval 244-297 (LNKKDSDSGDTFKHGPGSEGRSTEDIRSSDDEEESVINLDADEVETSETSSYTD) is disordered. The segment covering 246-256 (KKDSDSGDTFK) has biased composition (basic and acidic residues). The span at 273-289 (DDEEESVINLDADEVET) shows a compositional bias: acidic residues.

It is found in the nucleus. Its function is as follows. Transcription factor. Required for the terminal differentiation of sensory- and motor-neurons, especially GABAergic neurons, and for morphological aspects of uterine development. Plays a role in the cell-type-specific regulation of glutamic acid decarboxylase unc-25. Involved in promoting sleep-like behavioral quiescence, acting by modulating expression of transcription factor aptf-1 in the single sleep-active ring interneuron RIS. Plays a role in regulation of RIS differentiation. Required for the functional asymmetry of the ASER and ASEL chemosensory neuron pair, conferring the ability to discriminate sodium from chloride, perhaps by modulating expression of receptor-type guanylate cyclases, such as gcy-5. Involved in regulating postembryonic axon maintenance in the ventral nerve cord, acting in concert with LIM homeobox protein ceh-14, via modulation of expression of immunoglobulin domain zig genes in the interneuron PVT. May play a role in the functions of the excretory gland cell. In Caenorhabditis elegans, this protein is LIM/homeobox protein lim-6.